Reading from the N-terminus, the 180-residue chain is NADH-quinone oxidoreductase subunit I (180 aa).

2 4Fe-4S ferredoxin-type domains span residues 48-80 (IVLT…LQKS) and 90-119 (EFFR…LTPD). [4Fe-4S] cluster is bound by residues Cys60, Cys63, Cys66, Cys70, Cys99, Cys102, Cys105, and Cys109. Basic and acidic residues predominate over residues 161–174 (KPKGDAENEAKPID). Residues 161-180 (KPKGDAENEAKPIDVKSLLP) are disordered.

It belongs to the complex I 23 kDa subunit family. In terms of assembly, NDH-1 is composed of 14 different subunits. Subunits NuoA, H, J, K, L, M, N constitute the membrane sector of the complex. Requires [4Fe-4S] cluster as cofactor.

The protein localises to the cell inner membrane. The enzyme catalyses a quinone + NADH + 5 H(+)(in) = a quinol + NAD(+) + 4 H(+)(out). NDH-1 shuttles electrons from NADH, via FMN and iron-sulfur (Fe-S) centers, to quinones in the respiratory chain. The immediate electron acceptor for the enzyme in this species is believed to be ubiquinone. Couples the redox reaction to proton translocation (for every two electrons transferred, four hydrogen ions are translocated across the cytoplasmic membrane), and thus conserves the redox energy in a proton gradient. The polypeptide is NADH-quinone oxidoreductase subunit I (Aeromonas hydrophila subsp. hydrophila (strain ATCC 7966 / DSM 30187 / BCRC 13018 / CCUG 14551 / JCM 1027 / KCTC 2358 / NCIMB 9240 / NCTC 8049)).